Reading from the N-terminus, the 150-residue chain is D-aminoacyl-tRNA deacylase (150 aa).

The short motif at 138–139 (GP) is the Gly-cisPro motif, important for rejection of L-amino acids element.

It belongs to the DTD family. As to quaternary structure, homodimer.

The protein resides in the cytoplasm. It catalyses the reaction glycyl-tRNA(Ala) + H2O = tRNA(Ala) + glycine + H(+). The enzyme catalyses a D-aminoacyl-tRNA + H2O = a tRNA + a D-alpha-amino acid + H(+). In terms of biological role, an aminoacyl-tRNA editing enzyme that deacylates mischarged D-aminoacyl-tRNAs. Also deacylates mischarged glycyl-tRNA(Ala), protecting cells against glycine mischarging by AlaRS. Acts via tRNA-based rather than protein-based catalysis; rejects L-amino acids rather than detecting D-amino acids in the active site. By recycling D-aminoacyl-tRNA to D-amino acids and free tRNA molecules, this enzyme counteracts the toxicity associated with the formation of D-aminoacyl-tRNA entities in vivo and helps enforce protein L-homochirality. The polypeptide is D-aminoacyl-tRNA deacylase (Bacteroides thetaiotaomicron (strain ATCC 29148 / DSM 2079 / JCM 5827 / CCUG 10774 / NCTC 10582 / VPI-5482 / E50)).